The following is a 94-amino-acid chain: Co-chaperonin GroES (94 aa).

This sequence belongs to the GroES chaperonin family. Heptamer of 7 subunits arranged in a ring. Interacts with the chaperonin GroEL.

It localises to the cytoplasm. Together with the chaperonin GroEL, plays an essential role in assisting protein folding. The GroEL-GroES system forms a nano-cage that allows encapsulation of the non-native substrate proteins and provides a physical environment optimized to promote and accelerate protein folding. GroES binds to the apical surface of the GroEL ring, thereby capping the opening of the GroEL channel. The polypeptide is Co-chaperonin GroES (Clostridioides difficile (Peptoclostridium difficile)).